The chain runs to 577 residues: Arginine--tRNA ligase (577 aa).

The 'HIGH' region signature appears at 122 to 132; it reads PNVAKEMHVGH.

Belongs to the class-I aminoacyl-tRNA synthetase family. As to quaternary structure, monomer.

The protein resides in the cytoplasm. The catalysed reaction is tRNA(Arg) + L-arginine + ATP = L-arginyl-tRNA(Arg) + AMP + diphosphate. The chain is Arginine--tRNA ligase from Salmonella dublin (strain CT_02021853).